The chain runs to 1349 residues: Periaxin (1349 aa).

A Phosphoserine modification is found at serine 7. The PDZ domain occupies 16–99 (LVEIIVETEA…YKVSFCLKRT (84 aa)). The Nuclear export signal motif lies at 70-84 (VFFENFKYEDALRLL). Residue serine 133 is modified to Phosphoserine. 41 consecutive repeat copies span residues 402-406 (PPEVK), 410-414 (GPEVK), 418-422 (VPEVK), 426-430 (MPEPV), 431-435 (LPEVR), 436-440 (LPEVE), 444-448 (VSEMK), 452-456 (VPEMA), 457-461 (VPEVR), 462-466 (LPEVQ), 467-471 (LPKVP), 472-476 (EMKLP), 477-481 (EVKLP), 485-489 (EMAVP), 493-497 (LPEVQ), 501-505 (VPEMK), 506-510 (LPEVK), 514-518 (VPEMA), 519-523 (VPEVR), 524-528 (LPEVQ), 532-536 (VPEMK), 537-549 (LPKV…PEMK), 553-557 (VPEMA), 558-562 (VPEVR), 563-567 (LPEVQ), 571-575 (VPEVK), 576-580 (LPEVK), 589-593 (VPEMA), 594-598 (VPEVH), 599-603 (LPEVQ), 612-616 (VPDVK), 617-621 (LPEVK), 622-626 (LPEIK), 630-634 (VPEMV), 635-639 (VPDVH), 643-647 (VHLPK), 648-652 (VSEMR), 653-657 (LPEVQ), 661-665 (VPEVH), 669-673 (APEVK), and 674-678 (LPKAP). The tract at residues 402-678 (PPEVKVPKGP…APEVKLPKAP (277 aa)) is 41 X 5 AA approximate tandem repeats of [LVMGIE]-[PSM]-[EDKA]-[LIVMA]-[AQKHPRT]; that may have a tripeptide spacer of [ALKD]-[IPV]-[KPH]. Phosphoserine is present on residues serine 794 and serine 974. The segment covering 1207–1218 (AKEGAEEGEKAK) has biased composition (basic and acidic residues). Residues 1207 to 1349 (AKEGAEEGEK…RMEGAQAAVI (143 aa)) are disordered. Low complexity predominate over residues 1232-1242 (SEAVSGEGSPS). Phosphoserine is present on residues serine 1236, serine 1240, serine 1242, serine 1289, serine 1295, and serine 1327.

This sequence belongs to the periaxin family. As to quaternary structure, homodimer (via PDZ domain). Interacts with SCN10A. Found in a complex with SCN10A. Interacts with DRP2. Identified in a dystroglycan complex that contains at least PRX, DRP2, UTRN, DMD and DAG1. Detected in a complex composed of at least EZR, AHNAK, PPL and PRX. Identified in a complex with EZR, AHNAK, BFSP1, BFSP2, ANK2, PLEC, VIM and spectrin. In terms of tissue distribution, detected in eye lens (at protein level).

Its subcellular location is the nucleus. It localises to the cytoplasm. It is found in the cell membrane. The protein resides in the cell junction. The protein localises to the adherens junction. Scaffolding protein that functions as part of a dystroglycan complex in Schwann cells, and as part of EZR and AHNAK-containing complexes in eye lens fiber cells. Required for the maintenance of the peripheral myelin sheath that is essential for normal transmission of nerve impulses and normal perception of sensory stimuli. Required for normal transport of MBP mRNA from the perinuclear to the paranodal regions. Required for normal remyelination after nerve injury. Required for normal elongation of Schwann cells and normal length of the internodes between the nodes of Ranvier. The demyelinated nodes of Ranvier permit saltatory transmission of nerve impulses; shorter internodes cause slower transmission of nerve impulses. Required for the formation of appositions between the abaxonal surface of the myelin sheath and the Schwann cell plasma membrane; the Schwann cell cytoplasm is restricted to regions between these appositions. Required for the formation of Cajal bands and of Schmidt-Lanterman incisures that correspond to short, cytoplasm-filled regions on myelinated nerves. Recruits DRP2 to the Schwann cell plasma membrane. Required for normal protein composition of the eye lens fiber cell plasma membrane and normal eye lens fiber cell morphology. The polypeptide is Periaxin (PRX) (Bos taurus (Bovine)).